Here is a 247-residue protein sequence, read N- to C-terminus: Sugar fermentation stimulation protein homolog (247 aa).

This sequence belongs to the SfsA family.

In Oleidesulfovibrio alaskensis (strain ATCC BAA-1058 / DSM 17464 / G20) (Desulfovibrio alaskensis), this protein is Sugar fermentation stimulation protein homolog.